The primary structure comprises 458 residues: Argininosuccinate lyase (458 aa).

It belongs to the lyase 1 family. Argininosuccinate lyase subfamily.

The protein resides in the cytoplasm. It carries out the reaction 2-(N(omega)-L-arginino)succinate = fumarate + L-arginine. It functions in the pathway amino-acid biosynthesis; L-arginine biosynthesis; L-arginine from L-ornithine and carbamoyl phosphate: step 3/3. The polypeptide is Argininosuccinate lyase (Salmonella schwarzengrund (strain CVM19633)).